The chain runs to 126 residues: Glycine cleavage system H protein (126 aa).

The Lipoyl-binding domain occupies 22 to 104 (VAYVGITDYA…YGEGWLIKMK (83 aa)). Position 63 is an N6-lipoyllysine (K63).

The protein belongs to the GcvH family. In terms of assembly, the glycine cleavage system is composed of four proteins: P, T, L and H. Requires (R)-lipoate as cofactor.

In terms of biological role, the glycine cleavage system catalyzes the degradation of glycine. The H protein shuttles the methylamine group of glycine from the P protein to the T protein. The sequence is that of Glycine cleavage system H protein from Bacteroides fragilis (strain ATCC 25285 / DSM 2151 / CCUG 4856 / JCM 11019 / LMG 10263 / NCTC 9343 / Onslow / VPI 2553 / EN-2).